Here is a 319-residue protein sequence, read N- to C-terminus: Ribonucleoside-diphosphate reductase 2 subunit beta (319 aa).

The Fe cation site is built by aspartate 67, glutamate 98, and histidine 101. Tyrosine 105 is an active-site residue. 3 residues coordinate Fe cation: glutamate 158, glutamate 192, and histidine 195.

This sequence belongs to the ribonucleoside diphosphate reductase small chain family. Tetramer of two alpha and two beta subunits. It depends on Fe cation as a cofactor.

The catalysed reaction is a 2'-deoxyribonucleoside 5'-diphosphate + [thioredoxin]-disulfide + H2O = a ribonucleoside 5'-diphosphate + [thioredoxin]-dithiol. Functionally, provides the precursors necessary for DNA synthesis. Catalyzes the biosynthesis of deoxyribonucleotides from the corresponding ribonucleotides. R2F contains the tyrosyl radical required for catalysis. The polypeptide is Ribonucleoside-diphosphate reductase 2 subunit beta (nrdF) (Salmonella typhimurium (strain LT2 / SGSC1412 / ATCC 700720)).